The primary structure comprises 356 residues: UDP-N-acetylglucosamine--N-acetylmuramyl-(pentapeptide) pyrophosphoryl-undecaprenol N-acetylglucosamine transferase (356 aa).

Residues 11–13, asparagine 122, serine 186, and glutamine 287 each bind UDP-N-acetyl-alpha-D-glucosamine; that span reads TGG.

This sequence belongs to the glycosyltransferase 28 family. MurG subfamily.

The protein resides in the cell inner membrane. The enzyme catalyses di-trans,octa-cis-undecaprenyl diphospho-N-acetyl-alpha-D-muramoyl-L-alanyl-D-glutamyl-meso-2,6-diaminopimeloyl-D-alanyl-D-alanine + UDP-N-acetyl-alpha-D-glucosamine = di-trans,octa-cis-undecaprenyl diphospho-[N-acetyl-alpha-D-glucosaminyl-(1-&gt;4)]-N-acetyl-alpha-D-muramoyl-L-alanyl-D-glutamyl-meso-2,6-diaminopimeloyl-D-alanyl-D-alanine + UDP + H(+). It functions in the pathway cell wall biogenesis; peptidoglycan biosynthesis. Functionally, cell wall formation. Catalyzes the transfer of a GlcNAc subunit on undecaprenyl-pyrophosphoryl-MurNAc-pentapeptide (lipid intermediate I) to form undecaprenyl-pyrophosphoryl-MurNAc-(pentapeptide)GlcNAc (lipid intermediate II). The polypeptide is UDP-N-acetylglucosamine--N-acetylmuramyl-(pentapeptide) pyrophosphoryl-undecaprenol N-acetylglucosamine transferase (Anaplasma marginale (strain St. Maries)).